Reading from the N-terminus, the 317-residue chain is Ribosomal protein L11 methyltransferase (317 aa).

Threonine 158, glycine 179, aspartate 201, and asparagine 244 together coordinate S-adenosyl-L-methionine.

It belongs to the methyltransferase superfamily. PrmA family.

Its subcellular location is the cytoplasm. It carries out the reaction L-lysyl-[protein] + 3 S-adenosyl-L-methionine = N(6),N(6),N(6)-trimethyl-L-lysyl-[protein] + 3 S-adenosyl-L-homocysteine + 3 H(+). Methylates ribosomal protein L11. This is Ribosomal protein L11 methyltransferase from Lactococcus lactis subsp. cremoris (strain SK11).